An 814-amino-acid chain; its full sequence is Microbial collagenase (814 aa).

The first 21 residues, 1 to 21 (MELKILSVAIATTLTSTGVFA), serve as a signal peptide directing secretion. A propeptide spanning residues 22–75 (LSEPVSQVTEQHAHSAHTHGVEFNRVEYQPTATLPIQPSKATRVQSLESLDESS) is cleaved from the precursor. Histidine 477 serves as a coordination point for Zn(2+). The active site involves glutamate 478. Residue histidine 481 coordinates Zn(2+). One can recognise a PKD domain in the interval 609–697 (APNAVITANS…VVISALGGND (89 aa)).

Belongs to the peptidase M9A family. Zn(2+) serves as cofactor. Post-translationally, proteolytic cleavage might yield three different active forms.

The protein localises to the secreted. The catalysed reaction is Digestion of native collagen in the triple helical region at Xaa-|-Gly bonds. With synthetic peptides, a preference is shown for Gly at P3 and P1', Pro and Ala at P2 and P2', and hydroxyproline, Ala or Arg at P3'.. In Vibrio alginolyticus, this protein is Microbial collagenase.